The sequence spans 78 residues: Kassorin-S (78 aa).

Residues 1 to 22 (MLTLKKSMLLLFFLGMVSLSLA) form the signal peptide. A propeptide spanning residues 23-64 (NSKRADEEGEDKRADEEGEDKRADEEGEDKRADEEGEEKRKR) is cleaved from the precursor. Positions 24 to 60 (SKRADEEGEDKRADEEGEDKRADEEGEDKRADEEGEE) are disordered. Basic and acidic residues predominate over residues 25-60 (KRADEEGEDKRADEEGEDKRADEEGEDKRADEEGEE). L77 is modified (leucine amide).

This sequence belongs to the frog skin active peptide (FSAP) family. Brevinin subfamily. As to expression, expressed by the skin glands.

It is found in the secreted. Functionally, antimicrobial peptide. Active against the Gram-positive bacterium S.aureus (MIC=30 uM) and the yeast C.albicans (MIC=100 uM). Not effective against the Gram-negative bacterium E.coli at concentrations up to 250 uM. Lacks ability to induce contraction of smooth muscle in isolated guinea pig urinary bladder. Elicits histamine release from rat peritoneal mast cells. This chain is Kassorin-S, found in Kassina senegalensis (Senegal running frog).